A 125-amino-acid polypeptide reads, in one-letter code: Acidic phospholipase A2 HTe (125 aa).

7 disulfides stabilise this stretch: cysteine 11–cysteine 77, cysteine 27–cysteine 124, cysteine 29–cysteine 45, cysteine 44–cysteine 105, cysteine 51–cysteine 98, cysteine 61–cysteine 91, and cysteine 84–cysteine 96. Ca(2+) is bound by residues tyrosine 28, glycine 30, and glycine 32. Histidine 48 is an active-site residue. Aspartate 49 contacts Ca(2+). Residue aspartate 99 is part of the active site.

Belongs to the phospholipase A2 family. Group I subfamily. D49 sub-subfamily. Requires Ca(2+) as cofactor. Post-translationally, no glycosylation was detected on this protein. In terms of tissue distribution, expressed by the venom gland.

Its subcellular location is the secreted. It catalyses the reaction a 1,2-diacyl-sn-glycero-3-phosphocholine + H2O = a 1-acyl-sn-glycero-3-phosphocholine + a fatty acid + H(+). Functionally, snake venom phospholipase A2 (PLA2) that blocks neuromuscular transmission, but that does not produce blockade by virtue of a selective action on nerve endings. Instead, the toxin acts both on nerve and on muscle. PLA2 catalyzes the calcium-dependent hydrolysis of the 2-acyl groups in 3-sn-phosphoglycerides. The protein is Acidic phospholipase A2 HTe of Notechis scutatus scutatus (Mainland tiger snake).